We begin with the raw amino-acid sequence, 390 residues long: NADH-quinone oxidoreductase subunit H (390 aa).

9 helical membrane passes run 4–24 (WLLTLLITVVKAVAVILALLT), 78–98 (LVYTLAPIIAIGMALTAFGGI), 120–140 (VLALLALTSMGVYGIFLGGWA), 157–177 (MISYELGMGLSILGLLMLVGS), 191–211 (GWMILFQSLGFALFLISSFAE), 247–266 (YVNMITASALMSTLFFGGWR), 278–298 (IADIPILWLVVKIGFFLFVFI), 315–337 (FGWKLLLPLALFNTMLVAGYIAF), and 341–360 (WGWWPLALLSLLGLTALLAL).

It belongs to the complex I subunit 1 family. As to quaternary structure, NDH-1 is composed of 15 different subunits. Subunits NuoA, H, J, K, L, M, N constitute the membrane sector of the complex.

Its subcellular location is the cell membrane. It carries out the reaction a quinone + NADH + 5 H(+)(in) = a quinol + NAD(+) + 4 H(+)(out). In terms of biological role, NDH-1 shuttles electrons from NADH, via FMN and iron-sulfur (Fe-S) centers, to quinones in the respiratory chain. The immediate electron acceptor for the enzyme in this species is believed to be ubiquinone. Couples the redox reaction to proton translocation (for every two electrons transferred, four hydrogen ions are translocated across the cytoplasmic membrane), and thus conserves the redox energy in a proton gradient. This subunit may bind ubiquinone. The sequence is that of NADH-quinone oxidoreductase subunit H from Deinococcus deserti (strain DSM 17065 / CIP 109153 / LMG 22923 / VCD115).